Consider the following 356-residue polypeptide: Malate dehydrogenase, glyoxysomal (356 aa).

Residues 1-36 (MQPIPDVNQRIARISAHLHPPKYQMEESSVLRRANC) constitute a glyoxysome transit peptide. NAD(+) is bound by residues 51-57 (GAAGGIG) and Asp-77. Residues Arg-124 and Arg-130 each contribute to the substrate site. NAD(+) contacts are provided by residues Asn-137 and 160 to 162 (ISN). Residues Asn-162 and Arg-196 each contribute to the substrate site. Catalysis depends on His-220, which acts as the Proton acceptor. Position 271 (Met-271) interacts with NAD(+).

This sequence belongs to the LDH/MDH superfamily. MDH type 1 family. Homodimer.

The protein resides in the glyoxysome. The catalysed reaction is (S)-malate + NAD(+) = oxaloacetate + NADH + H(+). The chain is Malate dehydrogenase, glyoxysomal (MDHG) from Cucumis sativus (Cucumber).